A 188-amino-acid polypeptide reads, in one-letter code: Elongation factor P (188 aa).

This sequence belongs to the elongation factor P family.

Its subcellular location is the cytoplasm. Its pathway is protein biosynthesis; polypeptide chain elongation. Involved in peptide bond synthesis. Stimulates efficient translation and peptide-bond synthesis on native or reconstituted 70S ribosomes in vitro. Probably functions indirectly by altering the affinity of the ribosome for aminoacyl-tRNA, thus increasing their reactivity as acceptors for peptidyl transferase. This chain is Elongation factor P, found in Wolbachia sp. subsp. Brugia malayi (strain TRS).